We begin with the raw amino-acid sequence, 300 residues long: Bifunctional protein FolD (300 aa).

NADP(+)-binding positions include 169-171 (GRG), Ser-196, and Ile-237.

Belongs to the tetrahydrofolate dehydrogenase/cyclohydrolase family. Homodimer.

The enzyme catalyses (6R)-5,10-methylene-5,6,7,8-tetrahydrofolate + NADP(+) = (6R)-5,10-methenyltetrahydrofolate + NADPH. It catalyses the reaction (6R)-5,10-methenyltetrahydrofolate + H2O = (6R)-10-formyltetrahydrofolate + H(+). Its pathway is one-carbon metabolism; tetrahydrofolate interconversion. Functionally, catalyzes the oxidation of 5,10-methylenetetrahydrofolate to 5,10-methenyltetrahydrofolate and then the hydrolysis of 5,10-methenyltetrahydrofolate to 10-formyltetrahydrofolate. The protein is Bifunctional protein FolD of Clavibacter sepedonicus (Clavibacter michiganensis subsp. sepedonicus).